The sequence spans 693 residues: DNA ligase (693 aa).

NAD(+) is bound by residues 45–49 (DSEYD), 94–95 (SI), and Glu131. Lys133 functions as the N6-AMP-lysine intermediate in the catalytic mechanism. Residues Arg154, Glu190, Lys307, and Lys331 each contribute to the NAD(+) site. Residues Cys429, Cys432, Cys447, and Cys453 each contribute to the Zn(2+) site. In terms of domain architecture, BRCT spans 615-693 (ASSSKLEGKT…EEGLLSLLAE (79 aa)).

Belongs to the NAD-dependent DNA ligase family. LigA subfamily. Mg(2+) is required as a cofactor. The cofactor is Mn(2+).

It catalyses the reaction NAD(+) + (deoxyribonucleotide)n-3'-hydroxyl + 5'-phospho-(deoxyribonucleotide)m = (deoxyribonucleotide)n+m + AMP + beta-nicotinamide D-nucleotide.. Its function is as follows. DNA ligase that catalyzes the formation of phosphodiester linkages between 5'-phosphoryl and 3'-hydroxyl groups in double-stranded DNA using NAD as a coenzyme and as the energy source for the reaction. It is essential for DNA replication and repair of damaged DNA. The protein is DNA ligase of Methylobacillus flagellatus (strain ATCC 51484 / DSM 6875 / VKM B-1610 / KT).